A 207-amino-acid polypeptide reads, in one-letter code: Putative 3-methyladenine DNA glycosylase (207 aa).

Belongs to the DNA glycosylase MPG family.

The protein is Putative 3-methyladenine DNA glycosylase of Burkholderia orbicola (strain MC0-3).